Consider the following 142-residue polypeptide: Large ribosomal subunit protein uL13 (142 aa).

This sequence belongs to the universal ribosomal protein uL13 family. Part of the 50S ribosomal subunit.

In terms of biological role, this protein is one of the early assembly proteins of the 50S ribosomal subunit, although it is not seen to bind rRNA by itself. It is important during the early stages of 50S assembly. In Syntrophotalea carbinolica (strain DSM 2380 / NBRC 103641 / GraBd1) (Pelobacter carbinolicus), this protein is Large ribosomal subunit protein uL13.